We begin with the raw amino-acid sequence, 593 residues long: Aspartate--tRNA(Asp/Asn) ligase (593 aa).

Glu-172 contributes to the L-aspartate binding site. Positions 196 to 199 are aspartate; the sequence is QLFK. An L-aspartate-binding site is contributed by Arg-218. ATP is bound by residues 218–220 and Gln-227; that span reads RDE. Position 450 (His-450) interacts with L-aspartate. Glu-484 serves as a coordination point for ATP. Residue Arg-491 participates in L-aspartate binding. 536–539 is an ATP binding site; the sequence is GLDR.

This sequence belongs to the class-II aminoacyl-tRNA synthetase family. Type 1 subfamily. In terms of assembly, homodimer.

The protein localises to the cytoplasm. It catalyses the reaction tRNA(Asx) + L-aspartate + ATP = L-aspartyl-tRNA(Asx) + AMP + diphosphate. Its function is as follows. Aspartyl-tRNA synthetase with relaxed tRNA specificity since it is able to aspartylate not only its cognate tRNA(Asp) but also tRNA(Asn). Reaction proceeds in two steps: L-aspartate is first activated by ATP to form Asp-AMP and then transferred to the acceptor end of tRNA(Asp/Asn). The protein is Aspartate--tRNA(Asp/Asn) ligase of Nitrosomonas eutropha (strain DSM 101675 / C91 / Nm57).